The primary structure comprises 274 residues: Acyl-[acyl-carrier-protein]--UDP-N-acetylglucosamine O-acyltransferase (274 aa).

The protein belongs to the transferase hexapeptide repeat family. LpxA subfamily. As to quaternary structure, homotrimer.

The protein resides in the cytoplasm. It carries out the reaction a (3R)-hydroxyacyl-[ACP] + UDP-N-acetyl-alpha-D-glucosamine = a UDP-3-O-[(3R)-3-hydroxyacyl]-N-acetyl-alpha-D-glucosamine + holo-[ACP]. It functions in the pathway glycolipid biosynthesis; lipid IV(A) biosynthesis; lipid IV(A) from (3R)-3-hydroxytetradecanoyl-[acyl-carrier-protein] and UDP-N-acetyl-alpha-D-glucosamine: step 1/6. Involved in the biosynthesis of lipid A, a phosphorylated glycolipid that anchors the lipopolysaccharide to the outer membrane of the cell. The polypeptide is Acyl-[acyl-carrier-protein]--UDP-N-acetylglucosamine O-acyltransferase (Bartonella henselae (strain ATCC 49882 / DSM 28221 / CCUG 30454 / Houston 1) (Rochalimaea henselae)).